The sequence spans 212 residues: ECF RNA polymerase sigma factor SigD (212 aa).

Positions 49–119 are sigma-70 factor domain-2; that stretch reads ETIRPIVVRY…VADAHRAAGR (71 aa). The Polymerase core binding motif lies at 75–78; sequence DVAQ. The interval 152 to 201 is sigma-70 factor domain-4; sequence NELLEILPAKQREILILRVVVGLSAEETAAAVGSTTGAVRVAQHRALQRL. Residues 176-195 constitute a DNA-binding region (H-T-H motif); the sequence is AEETAAAVGSTTGAVRVAQH.

It belongs to the sigma-70 factor family. ECF subfamily. Interacts transiently with the RNA polymerase catalytic core formed by RpoA, RpoB, RpoC and RpoZ (2 alpha, 1 beta, 1 beta' and 1 omega subunit) to form the RNA polymerase holoenzyme that can initiate transcription. Interacts (via sigma-70 factor domain 4) with RsdA.

In terms of biological role, sigma factors are initiation factors that promote the attachment of RNA polymerase to specific initiation sites and are then released. Extracytoplasmic function (ECF) sigma factors are held in an inactive form by an anti-sigma factor until released by regulated intramembrane proteolysis. The sequence is that of ECF RNA polymerase sigma factor SigD (sigD) from Mycobacterium bovis (strain ATCC BAA-935 / AF2122/97).